A 358-amino-acid polypeptide reads, in one-letter code: UDP-N-acetylglucosamine--N-acetylmuramyl-(pentapeptide) pyrophosphoryl-undecaprenol N-acetylglucosamine transferase (358 aa).

UDP-N-acetyl-alpha-D-glucosamine contacts are provided by residues 10–12, N124, S196, and Q293; that span reads TGG.

The protein belongs to the glycosyltransferase 28 family. MurG subfamily.

The protein resides in the cell membrane. The catalysed reaction is di-trans,octa-cis-undecaprenyl diphospho-N-acetyl-alpha-D-muramoyl-L-alanyl-D-glutamyl-meso-2,6-diaminopimeloyl-D-alanyl-D-alanine + UDP-N-acetyl-alpha-D-glucosamine = di-trans,octa-cis-undecaprenyl diphospho-[N-acetyl-alpha-D-glucosaminyl-(1-&gt;4)]-N-acetyl-alpha-D-muramoyl-L-alanyl-D-glutamyl-meso-2,6-diaminopimeloyl-D-alanyl-D-alanine + UDP + H(+). It functions in the pathway cell wall biogenesis; peptidoglycan biosynthesis. Cell wall formation. Catalyzes the transfer of a GlcNAc subunit on undecaprenyl-pyrophosphoryl-MurNAc-pentapeptide (lipid intermediate I) to form undecaprenyl-pyrophosphoryl-MurNAc-(pentapeptide)GlcNAc (lipid intermediate II). The chain is UDP-N-acetylglucosamine--N-acetylmuramyl-(pentapeptide) pyrophosphoryl-undecaprenol N-acetylglucosamine transferase from Exiguobacterium sp. (strain ATCC BAA-1283 / AT1b).